Here is a 233-residue protein sequence, read N- to C-terminus: Large ribosomal subunit protein uL2 (233 aa).

The segment at proline 195 to arginine 233 is disordered. Positions lysine 219 to arginine 233 are enriched in basic residues.

This sequence belongs to the universal ribosomal protein uL2 family. As to quaternary structure, part of the 50S ribosomal subunit. Forms a bridge to the 30S subunit in the 70S ribosome.

One of the primary rRNA binding proteins. Required for association of the 30S and 50S subunits to form the 70S ribosome, for tRNA binding and peptide bond formation. It has been suggested to have peptidyltransferase activity; this is somewhat controversial. Makes several contacts with the 16S rRNA in the 70S ribosome. The polypeptide is Large ribosomal subunit protein uL2 (Thermoplasma acidophilum (strain ATCC 25905 / DSM 1728 / JCM 9062 / NBRC 15155 / AMRC-C165)).